The following is a 286-amino-acid chain: Bifunctional protein FolD (286 aa).

NADP(+)-binding positions include 166 to 168 and Ser191; that span reads GRS.

Belongs to the tetrahydrofolate dehydrogenase/cyclohydrolase family. Homodimer.

The enzyme catalyses (6R)-5,10-methylene-5,6,7,8-tetrahydrofolate + NADP(+) = (6R)-5,10-methenyltetrahydrofolate + NADPH. It catalyses the reaction (6R)-5,10-methenyltetrahydrofolate + H2O = (6R)-10-formyltetrahydrofolate + H(+). The protein operates within one-carbon metabolism; tetrahydrofolate interconversion. Its function is as follows. Catalyzes the oxidation of 5,10-methylenetetrahydrofolate to 5,10-methenyltetrahydrofolate and then the hydrolysis of 5,10-methenyltetrahydrofolate to 10-formyltetrahydrofolate. This Lactiplantibacillus plantarum (strain ATCC BAA-793 / NCIMB 8826 / WCFS1) (Lactobacillus plantarum) protein is Bifunctional protein FolD.